A 75-amino-acid chain; its full sequence is Translational regulator CsrA (75 aa).

Belongs to the CsrA/RsmA family. In terms of assembly, homodimer; the beta-strands of each monomer intercalate to form a hydrophobic core, while the alpha-helices form wings that extend away from the core.

It is found in the cytoplasm. In terms of biological role, a translational regulator that binds mRNA to regulate translation initiation and/or mRNA stability. Usually binds in the 5'-UTR at or near the Shine-Dalgarno sequence preventing ribosome-binding, thus repressing translation. Its main target seems to be the major flagellin gene, while its function is anatagonized by FliW. The chain is Translational regulator CsrA from Acetivibrio thermocellus (strain ATCC 27405 / DSM 1237 / JCM 9322 / NBRC 103400 / NCIMB 10682 / NRRL B-4536 / VPI 7372) (Clostridium thermocellum).